The primary structure comprises 629 residues: Keratin, type II cytoskeletal 3 (629 aa).

The head stretch occupies residues 1 to 182 (MNRQVCKTSG…DPQIGQVRAQ (182 aa)). 2 positions are modified to phosphoserine: Ser-13 and Ser-62. The interval 183–218 (EREQIKTLNNKFASFIDKVRFLEQQNKVLETKWELL) is coil 1A. The region spanning 183–498 (EREQIKTLNN…KLLEGEESRM (316 aa)) is the IF rod domain. Residues 219–239 (QRQGPNSVTGTNNLEPLFENR) are linker 1. A coil 1B region spans residues 240 to 331 (INYLRSYLDS…TLYDAELSQM (92 aa)). At Lys-281 the chain carries N6,N6-dimethyllysine. The segment at 332–355 (QSHVSDMSVVLSMDNNRSLDLDSI) is linker 12. Ser-349 carries the post-translational modification Phosphoserine. The segment at 356-494 (IAEVRAQYED…ATYRKLLEGE (139 aa)) is coil 2. The segment at 495–629 (ESRMSGECQS…FSQSSQRYSR (135 aa)) is tail. Residues 603–629 (SGGGFSSGSSSRGSSVKFSQSSQRYSR) are disordered. Polar residues predominate over residues 618-629 (VKFSQSSQRYSR).

It belongs to the intermediate filament family. As to quaternary structure, heterotetramer of two type I and two type II keratins. Keratin-3 associates with keratin-12. In terms of tissue distribution, cornea specific. Expressed in the basal cells of corneal epithelium and stroma. Also expressed in esophageal epithelium.

This Oryctolagus cuniculus (Rabbit) protein is Keratin, type II cytoskeletal 3 (KRT3).